The following is a 324-amino-acid chain: Beta-ketoacyl-[acyl-carrier-protein] synthase III (324 aa).

Active-site residues include Cys-114 and His-251. The ACP-binding stretch occupies residues 252-256; sequence QANLR. The active site involves Asn-281.

Belongs to the thiolase-like superfamily. FabH family. Homodimer.

It localises to the cytoplasm. It carries out the reaction malonyl-[ACP] + acetyl-CoA + H(+) = 3-oxobutanoyl-[ACP] + CO2 + CoA. It participates in lipid metabolism; fatty acid biosynthesis. In terms of biological role, catalyzes the condensation reaction of fatty acid synthesis by the addition to an acyl acceptor of two carbons from malonyl-ACP. Catalyzes the first condensation reaction which initiates fatty acid synthesis and may therefore play a role in governing the total rate of fatty acid production. Possesses both acetoacetyl-ACP synthase and acetyl transacylase activities. Its substrate specificity determines the biosynthesis of branched-chain and/or straight-chain of fatty acids. In Dinoroseobacter shibae (strain DSM 16493 / NCIMB 14021 / DFL 12), this protein is Beta-ketoacyl-[acyl-carrier-protein] synthase III.